The chain runs to 120 residues: Autophagy-related protein 8C (120 aa).

The disordered stretch occupies residues 1 to 20; that stretch reads MARSSFKLEHPLERRQAEAN. G117 is lipidated: Phosphatidylethanolamine amidated glycine. Positions 118-120 are cleaved as a propeptide — removed in mature form; sequence LFV.

It belongs to the ATG8 family. In terms of assembly, interacts with ATG4. The C-terminal 3 residues are removed by ATG4 to expose Gly-117 at the C-terminus. The C-terminal Gly is then amidated with phosphatidylethanolamine by an activating system similar to that for ubiquitin.

It localises to the cytoplasmic vesicle. It is found in the autophagosome membrane. Its subcellular location is the vacuole membrane. The protein localises to the cytoplasm. The protein resides in the cytoskeleton. In terms of biological role, ubiquitin-like modifier involved in autophagosomes formation. May mediate the delivery of the autophagosomes to the vacuole via the microtubule cytoskeleton. The chain is Autophagy-related protein 8C (ATG8C) from Oryza sativa subsp. indica (Rice).